A 208-amino-acid polypeptide reads, in one-letter code: Protein-L-isoaspartate O-methyltransferase (208 aa).

Ser59 is an active-site residue.

It belongs to the methyltransferase superfamily. L-isoaspartyl/D-aspartyl protein methyltransferase family.

The protein localises to the cytoplasm. It carries out the reaction [protein]-L-isoaspartate + S-adenosyl-L-methionine = [protein]-L-isoaspartate alpha-methyl ester + S-adenosyl-L-homocysteine. Functionally, catalyzes the methyl esterification of L-isoaspartyl residues in peptides and proteins that result from spontaneous decomposition of normal L-aspartyl and L-asparaginyl residues. It plays a role in the repair and/or degradation of damaged proteins. The protein is Protein-L-isoaspartate O-methyltransferase of Escherichia coli (strain K12 / MC4100 / BW2952).